We begin with the raw amino-acid sequence, 164 residues long: IQ domain-containing protein F2 (164 aa).

IQ domains are found at residues 43–72 (RTKA…RAWI) and 99–128 (RERA…AIYI).

This chain is IQ domain-containing protein F2 (IQCF2), found in Homo sapiens (Human).